A 493-amino-acid chain; its full sequence is Cytochrome c-552 (493 aa).

The first 25 residues, 1-25 (MEKKLKSWQGWLLFCGAMAVVFVLG), serve as a signal peptide directing secretion. A heme c-binding site is contributed by histidine 116. Positions 144, 147, and 148 each coordinate heme. Positions 182, 185, 186, 224, 227, and 228 each coordinate heme c. Glutamate 230, tyrosine 231, lysine 276, and glutamine 278 together coordinate Ca(2+). A substrate-binding site is contributed by tyrosine 231. Residue histidine 279 participates in substrate binding. Heme c-binding residues include histidine 290, cysteine 297, cysteine 300, histidine 301, histidine 315, cysteine 328, cysteine 331, histidine 332, and histidine 407.

Belongs to the cytochrome c-552 family. It depends on Ca(2+) as a cofactor. Heme c serves as cofactor.

The protein localises to the periplasm. The catalysed reaction is 6 Fe(III)-[cytochrome c] + NH4(+) + 2 H2O = 6 Fe(II)-[cytochrome c] + nitrite + 8 H(+). It participates in nitrogen metabolism; nitrate reduction (assimilation). Catalyzes the reduction of nitrite to ammonia, consuming six electrons in the process. This is Cytochrome c-552 from Bacteroides fragilis (strain YCH46).